Here is a 272-residue protein sequence, read N- to C-terminus: uncharacterized protein (272 aa).

Residues 12–34, 39–40, 77–78, and asparagine 104 each bind NAD(+); these read FITG…DGAN, DI, and DV. Serine 153 is a binding site for substrate. Catalysis depends on tyrosine 170, which acts as the Proton acceptor. NAD(+)-binding positions include lysine 174 and 203–205; that span reads VDT.

Belongs to the short-chain dehydrogenases/reductases (SDR) family.

This is an uncharacterized protein from Mycobacterium tuberculosis (strain CDC 1551 / Oshkosh).